Reading from the N-terminus, the 271-residue chain is Methyltransferase psoC (271 aa).

Belongs to the methyltransferase superfamily. LaeA methyltransferase family.

Its pathway is secondary metabolite biosynthesis. In terms of biological role, methyltransferase; part of the gene cluster that mediates the biosynthesis of pseurotin A, a competitive inhibitor of chitin synthase and an inducer of nerve-cell proliferation. The PKS-NRPS hybrid synthetase psoA is responsible for the biosynthesis of azaspirene, one of the first intermediates having the 1-oxa-7-azaspiro[4,4]-non-2-ene-4,6-dione core of pseurotin, via condensation of one acetyl-CoA, 4 malonyl-CoA, and a L-phenylalanine molecule. The dual-functional monooxygenase/methyltransferase psoF seems to be involved in the addition of the C3 methyl group onto the pseurotin scaffold. Azaspirene is then converted to synerazol through 4 steps including oxidation of C17 by the cytochrome P450 monooxygenase psoD, O-methylation of the hydroxy group of C8 by the methyltransferase psoC, and the trans-to-cis isomerization of the C13 olefin by the glutathione S-transferase psoE. The fourth step of synerazol production is performed by the dual-functional monooxygenase/methyltransferase psoF which seems to catalyze the epoxidation of the intermediate deepoxy-synerazol. Synerazol can be attacked by a water molecule nonenzymatically at two different positions to yield two diol products, pseurotin A and pseurotin D. This Aspergillus fumigatus (strain ATCC MYA-4609 / CBS 101355 / FGSC A1100 / Af293) (Neosartorya fumigata) protein is Methyltransferase psoC.